A 419-amino-acid chain; its full sequence is tRNA modification GTPase MnmE (419 aa).

3 residues coordinate (6S)-5-formyl-5,6,7,8-tetrahydrofolate: R2, E59, and R99. A TrmE-type G domain is found at 197 to 343; it reads GLSVVIAGPP…LHTMIVEMAR (147 aa). Residue N207 participates in K(+) binding. GTP-binding positions include 207-212, 226-232, and 251-254; these read NAGKST, SPVAGTT, and DTAG. Position 211 (S211) interacts with Mg(2+). Residues S226, V228, and T231 each coordinate K(+). Residue T232 participates in Mg(2+) binding. K419 is a (6S)-5-formyl-5,6,7,8-tetrahydrofolate binding site.

Belongs to the TRAFAC class TrmE-Era-EngA-EngB-Septin-like GTPase superfamily. TrmE GTPase family. Homodimer. Heterotetramer of two MnmE and two MnmG subunits. It depends on K(+) as a cofactor.

Its subcellular location is the cytoplasm. Its function is as follows. Exhibits a very high intrinsic GTPase hydrolysis rate. Involved in the addition of a carboxymethylaminomethyl (cmnm) group at the wobble position (U34) of certain tRNAs, forming tRNA-cmnm(5)s(2)U34. This Sphingopyxis alaskensis (strain DSM 13593 / LMG 18877 / RB2256) (Sphingomonas alaskensis) protein is tRNA modification GTPase MnmE.